We begin with the raw amino-acid sequence, 452 residues long: Phosphoglucosamine mutase (452 aa).

Residue Ser103 is the Phosphoserine intermediate of the active site. 4 residues coordinate Mg(2+): Ser103, Asp243, Asp245, and Asp247. Position 103 is a phosphoserine (Ser103).

The protein belongs to the phosphohexose mutase family. Mg(2+) serves as cofactor. In terms of processing, activated by phosphorylation.

It carries out the reaction alpha-D-glucosamine 1-phosphate = D-glucosamine 6-phosphate. Its function is as follows. Catalyzes the conversion of glucosamine-6-phosphate to glucosamine-1-phosphate. The polypeptide is Phosphoglucosamine mutase (Exiguobacterium sp. (strain ATCC BAA-1283 / AT1b)).